An 85-amino-acid chain; its full sequence is Cysteine-rich venom protein 1 (85 aa).

The first 21 residues, 1–21 (MCRYALIVLVVVVVATNLSEA), serve as a signal peptide directing secretion. Disulfide bonds link cysteine 29–cysteine 63, cysteine 38–cysteine 59, cysteine 42–cysteine 53, cysteine 46–cysteine 84, and cysteine 65–cysteine 78. Residues 29–84 (CEPNRIYKTCGPACPPTCEDPDPDCNETPQCKAGCFCIPGLIENMKGGNCISPSLC) enclose the TIL domain.

The protein belongs to the serine protease inhibitor-like (TIL domain-containing) family. Expressed by the venom gland.

It is found in the secreted. Its function is as follows. May be a phenoloxidase inhibitor that stabilizes or inhibits venom phenoloxidase while it is stored in the venom sac. The chain is Cysteine-rich venom protein 1 from Pimpla hypochondriaca (Parasitoid wasp).